A 568-amino-acid polypeptide reads, in one-letter code: NADPH oxidase 3 (568 aa).

Residues 1–12 (MPTCWILNESVS) are Cytoplasmic-facing. Residues 13-33 (FVVALLWLAINIYLFIDTFCW) form a helical membrane-spanning segment. At 34–49 (YAEEESFFYTRVILGS) the chain is on the extracellular side. A helical transmembrane segment spans residues 50-70 (ALAWARASAVCLNFNCMLILL). A Ferric oxidoreductase domain is found at 55-284 (RASAVCLNFN…VVLYACEIII (230 aa)). At 71–103 (PVSRNFVSLVRGTSVCCRGPWRRQLDKNLKFHK) the chain is on the cytoplasmic side. Residues 104 to 124 (LVAYGIAVNSVIHIVAHLFNL) form a helical membrane-spanning segment. Topologically, residues 125–167 (ERYHLGQAKDAEGLLAALSKLGNAPNESYLNPVRTLYTGTTTQ) are extracellular. A helical membrane pass occupies residues 168-188 (LLMTVSGITGLVISLALILIM). Over 189 to 201 (TSSTEFIRQSSYE) the chain is Cytoplasmic. A helical transmembrane segment spans residues 202–222 (LFWYTHHIFIFLFISLAIHGG). Residues 223 to 395 (GRIIRGQTPE…DGPFGGSLAD (173 aa)) are Extracellular-facing. N238 is a glycosylation site (N-linked (GlcNAc...) asparagine). An FAD-binding FR-type domain is found at 285 to 395 (RFWRSHQEVV…DGPFGGSLAD (111 aa)). Residues 396 to 416 (VFHYPVSVCIATGIGVTPFAS) traverse the membrane as a helical segment. Residues 417–568 (LLKSVWYKCC…VHFYYNKENF (152 aa)) lie on the Cytoplasmic side of the membrane.

Forms a heterodimer with CYBA/p22phox which is essential for its activity and cell membrane localization. The cofactor is heme. In terms of processing, N-glycosylated in a CYBA/p22phox-dependent manner. Expressed in the inner ear by the spiral glanglia and the organ of Corti.

The protein localises to the cell membrane. The catalysed reaction is NADPH + 2 O2 = 2 superoxide + NADP(+) + H(+). With respect to regulation, activated by the ototoxic drug cisplatin. Activated by NOXO1. Cooperatively activated by NCF1 and NCF2 or NOXA1 in a phorbol 12-myristate 13-acetate (PMA)-dependent manner. Inhibited by diphenyleneiodonium chloride. Its function is as follows. NADPH oxidase that catalyzes the generation of superoxide from molecular oxygen utilizing NADPH as an electron donor, upon formation of a complex with CYBA/p22phox. Plays a role in the biogenesis of otoconia/otolith, which are crystalline structures of the inner ear involved in the perception of gravity. The chain is NADPH oxidase 3 (Nox3) from Rattus norvegicus (Rat).